Here is a 375-residue protein sequence, read N- to C-terminus: DNA replication and repair protein RecF (375 aa).

30-37 contributes to the ATP binding site; the sequence is GENAQGKT.

It belongs to the RecF family.

Its subcellular location is the cytoplasm. Functionally, the RecF protein is involved in DNA metabolism; it is required for DNA replication and normal SOS inducibility. RecF binds preferentially to single-stranded, linear DNA. It also seems to bind ATP. In Latilactobacillus sakei subsp. sakei (strain 23K) (Lactobacillus sakei subsp. sakei), this protein is DNA replication and repair protein RecF.